The following is a 525-amino-acid chain: G-protein regulator 1 (525 aa).

One can recognise a GoLoco domain in the interval 424–445; it reads PVDMMDLIFSMSSRMDDQRTEL. Residues 488 to 525 form a disordered region; the sequence is HTMNRILKRSKKSKSSLDSTNSMQGDDTRSDDVTMTSK.

As to quaternary structure, interacts with gpr-1, lin-5 and GDP-bound goa-1.

The protein resides in the cytoplasm. The protein localises to the cell cortex. Its subcellular location is the cytoskeleton. It localises to the spindle. Functionally, in the 1-cell embryo, probably together with gpr-2, controls nuclear rotation and spindle elongation during mitosis. Complex of gpr-1 and gpr-2, in association with lin-5, activates G-protein signaling to affect mitotic spindle force. Polarity determinants (par genes) may regulate lin-5/gpr-1/gpr-2/goa-1 locally to create the asymmetric forces that drive spindle movement. The protein is G-protein regulator 1 (gpr-1) of Caenorhabditis elegans.